A 1106-amino-acid chain; its full sequence is Carbamoyl phosphate synthase large chain (1106 aa).

Residues 1 to 402 form a carboxyphosphate synthetic domain region; that stretch reads MPRRQDLNSV…ALQKAMRSLE (402 aa). Residues Arg129, Arg169, Gly175, Gly176, Glu208, Ile210, Glu215, Gly241, Val242, His243, Gln285, and Glu299 each contribute to the ATP site. Residues 133–328 enclose the ATP-grasp 1 domain; it reads KGVVERCGAE…IAKIATKLSL (196 aa). Mg(2+) is bound by residues Gln285, Glu299, and Asn301. 3 residues coordinate Mn(2+): Gln285, Glu299, and Asn301. Residues 403-550 are oligomerization domain; that stretch reads QKGSAFSFAR…YHYSSYDRET (148 aa). The segment at 551–953 is carbamoyl phosphate synthetic domain; that stretch reads EVAPHEKPSV…AFAKAQAAAG (403 aa). In terms of domain architecture, ATP-grasp 2 spans 681–872; that stretch reads ARVLTEAGLR…MAKAAALIGT (192 aa). 10 residues coordinate ATP: Arg717, Lys756, Leu758, Glu763, Gly788, Ile789, His790, Ser791, Gln831, and Glu843. Mg(2+)-binding residues include Gln831, Glu843, and Asn845. Gln831, Glu843, and Asn845 together coordinate Mn(2+). An MGS-like domain is found at 954 to 1106; sequence GPLPTSGSLF…ERAAQEASRD (153 aa). The segment at 954–1106 is allosteric domain; it reads GPLPTSGSLF…ERAAQEASRD (153 aa).

Belongs to the CarB family. In terms of assembly, composed of two chains; the small (or glutamine) chain promotes the hydrolysis of glutamine to ammonia, which is used by the large (or ammonia) chain to synthesize carbamoyl phosphate. Tetramer of heterodimers (alpha,beta)4. It depends on Mg(2+) as a cofactor. Requires Mn(2+) as cofactor.

The catalysed reaction is hydrogencarbonate + L-glutamine + 2 ATP + H2O = carbamoyl phosphate + L-glutamate + 2 ADP + phosphate + 2 H(+). It catalyses the reaction hydrogencarbonate + NH4(+) + 2 ATP = carbamoyl phosphate + 2 ADP + phosphate + 2 H(+). It participates in amino-acid biosynthesis; L-arginine biosynthesis; carbamoyl phosphate from bicarbonate: step 1/1. It functions in the pathway pyrimidine metabolism; UMP biosynthesis via de novo pathway; (S)-dihydroorotate from bicarbonate: step 1/3. Its function is as follows. Large subunit of the glutamine-dependent carbamoyl phosphate synthetase (CPSase). CPSase catalyzes the formation of carbamoyl phosphate from the ammonia moiety of glutamine, carbonate, and phosphate donated by ATP, constituting the first step of 2 biosynthetic pathways, one leading to arginine and/or urea and the other to pyrimidine nucleotides. The large subunit (synthetase) binds the substrates ammonia (free or transferred from glutamine from the small subunit), hydrogencarbonate and ATP and carries out an ATP-coupled ligase reaction, activating hydrogencarbonate by forming carboxy phosphate which reacts with ammonia to form carbamoyl phosphate. The polypeptide is Carbamoyl phosphate synthase large chain (Kocuria rhizophila (strain ATCC 9341 / DSM 348 / NBRC 103217 / DC2201)).